The following is a 124-amino-acid chain: Holo-[acyl-carrier-protein] synthase (124 aa).

Residues Asp8 and Glu58 each contribute to the Mg(2+) site.

It belongs to the P-Pant transferase superfamily. AcpS family. Requires Mg(2+) as cofactor.

The protein localises to the cytoplasm. It catalyses the reaction apo-[ACP] + CoA = holo-[ACP] + adenosine 3',5'-bisphosphate + H(+). Functionally, transfers the 4'-phosphopantetheine moiety from coenzyme A to a Ser of acyl-carrier-protein. The protein is Holo-[acyl-carrier-protein] synthase of Lacticaseibacillus casei (strain BL23) (Lactobacillus casei).